A 62-amino-acid polypeptide reads, in one-letter code: uncharacterized protein (62 aa).

This is an uncharacterized protein from Acidianus filamentous virus 2 (isolate Italy/Pozzuoli) (AFV-2).